The sequence spans 202 residues: Holliday junction branch migration complex subunit RuvA (202 aa).

Positions 1-64 (MIDYVSGTLV…EDDESLYGFA (64 aa)) are domain I. Residues 65–143 (TKAERTVFET…DLDVLEDTSP (79 aa)) are domain II. The interval 144 to 149 (LSGGSD) is flexible linker. The segment at 150 to 202 (ARAEARADALEALTELGLSKADAERSIRQVLRDNAGIQSADELVRRALKADQE) is domain III.

It belongs to the RuvA family. Homotetramer. Forms an RuvA(8)-RuvB(12)-Holliday junction (HJ) complex. HJ DNA is sandwiched between 2 RuvA tetramers; dsDNA enters through RuvA and exits via RuvB. An RuvB hexamer assembles on each DNA strand where it exits the tetramer. Each RuvB hexamer is contacted by two RuvA subunits (via domain III) on 2 adjacent RuvB subunits; this complex drives branch migration. In the full resolvosome a probable DNA-RuvA(4)-RuvB(12)-RuvC(2) complex forms which resolves the HJ.

The protein resides in the cytoplasm. The RuvA-RuvB-RuvC complex processes Holliday junction (HJ) DNA during genetic recombination and DNA repair, while the RuvA-RuvB complex plays an important role in the rescue of blocked DNA replication forks via replication fork reversal (RFR). RuvA specifically binds to HJ cruciform DNA, conferring on it an open structure. The RuvB hexamer acts as an ATP-dependent pump, pulling dsDNA into and through the RuvAB complex. HJ branch migration allows RuvC to scan DNA until it finds its consensus sequence, where it cleaves and resolves the cruciform DNA. The sequence is that of Holliday junction branch migration complex subunit RuvA from Salinibacter ruber (strain DSM 13855 / M31).